A 127-amino-acid chain; its full sequence is Large ribosomal subunit protein bL19 (127 aa).

This sequence belongs to the bacterial ribosomal protein bL19 family.

Its function is as follows. This protein is located at the 30S-50S ribosomal subunit interface and may play a role in the structure and function of the aminoacyl-tRNA binding site. The protein is Large ribosomal subunit protein bL19 of Cupriavidus pinatubonensis (strain JMP 134 / LMG 1197) (Cupriavidus necator (strain JMP 134)).